The primary structure comprises 209 residues: Uracil phosphoribosyltransferase (209 aa).

Residues Arg79, Arg104, and 131-139 each bind 5-phospho-alpha-D-ribose 1-diphosphate; that span reads DPMLATGGS. Uracil contacts are provided by residues Ile194 and 199-201; that span reads GDA. 5-phospho-alpha-D-ribose 1-diphosphate is bound at residue Asp200.

It belongs to the UPRTase family. Requires Mg(2+) as cofactor.

It carries out the reaction UMP + diphosphate = 5-phospho-alpha-D-ribose 1-diphosphate + uracil. It participates in pyrimidine metabolism; UMP biosynthesis via salvage pathway; UMP from uracil: step 1/1. Allosterically activated by GTP. In terms of biological role, catalyzes the conversion of uracil and 5-phospho-alpha-D-ribose 1-diphosphate (PRPP) to UMP and diphosphate. This is Uracil phosphoribosyltransferase from Symbiobacterium thermophilum (strain DSM 24528 / JCM 14929 / IAM 14863 / T).